The sequence spans 7760 residues: Malpinin synthetase (7760 aa).

Disordered regions lie at residues E42–K115 and L161–V180. Polar residues predominate over residues T65 to P79. The segment at T87–L389 is condensation 1. The span at P164–V180 shows a compositional bias: basic and acidic residues. Residues F409–R813 are adenylation 1. The Carrier 1 domain maps to P926–R1000. S961 is subject to O-(pantetheine 4'-phosphoryl)serine. Residues Q1046–L1477 are dual epimerase/condensation (E/C) domain 1. The adenylation 2 stretch occupies residues F1498 to R1893. Residues A2003–R2077 form the Carrier 2 domain. S2038 carries the O-(pantetheine 4'-phosphoryl)serine modification. The interval P2099–T2558 is dual epimerase/condensation (E/C) domain 2. Residues F2578–R2973 are adenylation 3. One can recognise a Carrier 3 domain in the interval A3083–R3157. S3118 bears the O-(pantetheine 4'-phosphoryl)serine mark. Positions Q3203–R3634 are dual epimerase/condensation (E/C) domain 3. Residues F3658–R4057 form an adenylation 4 region. Residues A4174–L4248 enclose the Carrier 4 domain. At S4209 the chain carries O-(pantetheine 4'-phosphoryl)serine. The tract at residues L4267 to R4705 is condensation 2. The interval F4729 to R5133 is adenylation 5. Residues A5250–Q5324 form the Carrier 5 domain. O-(pantetheine 4'-phosphoryl)serine is present on S5285. The segment at Q5370–L5804 is dual dehydration/condensation (C*) domain. The segment at F5825 to R6224 is adenylation 6. The Carrier 6 domain maps to A6338 to H6412. S6373 is modified (O-(pantetheine 4'-phosphoryl)serine). The segment at Q6458–H6890 is dual epimerase/condensation (E/C) domain 4. Residues F6914–C7300 are adenylation 7. Positions E7428 to G7503 constitute a Carrier 7 domain. S7463 is modified (O-(pantetheine 4'-phosphoryl)serine). The interval D7561–V7722 is thioesterase (TE) domain.

This sequence belongs to the NRP synthetase family.

Its function is as follows. Heptamodular nonribosomal peptide synthetase that catalyzes the biosynthesis of malpinins, natural products that show biosurfactant activities. Malpinins are acetylated hexapeptides (Ac-D-Leu/Val-D-Arg-D-Leu/Val-L-Phe/Leu-Dhb-D-Trp) containing a non-canonical amino acid derived from dehydration of L-Trp, (Z)-dehydrobutyrine (Dhb), at position 5, as well as a C-terminal D-amino acid, D-tryptophan, that can be oxidized to kynurenine. Incorporated D-amino acids in positions 1, 3 and 4 are variable resulting in the malpinin A-congeners malpinin B to E. Both modules M1 and M3 have relaxed specificity towards aliphatic amino acids (L-Leu &gt; L-Met &gt; L/D-Val &gt; L-Cys), explaining Val at position 1 and 3 in malpinin A-congeners malpinin B to D. The incorporation of L-Leu, but not N-acetyl-L-Leu by module 1 suggests the N-terminal acetylation occurs at a later stage of biosynthesis. Similar to M1 and M3, M4 has a broad substrate spectrum showing the highest activity with L-Phe followed by other hydrophobic amino acids (L-Phe &gt; L-Met = L-Trp). In contrast, M2, M5 and M6 are highly specific for L-Arg, L-Thr, and L-Trp, respectively. Solely, M7 converted its preferred substrate (L-Phe) with a 15 000-fold reduced turnover rate compared to the most active module M6, indicating that its A domain cannot contribute to the malpinin biosynthesis due to low activity. Since the last T domain in malA is apparently not loaded with an amino acid, either the TE domain must offload the oligopeptide from the preceding T domain or the dual E/C domain of M7 must transfer the final peptide chain to the free acceptor T domain of M7 prior to release. This Mortierella alpina (Oleaginous fungus) protein is Malpinin synthetase.